The primary structure comprises 266 residues: Thymidylate synthase (266 aa).

DUMP is bound at residue arginine 24. Histidine 54 contacts (6R)-5,10-methylene-5,6,7,8-tetrahydrofolate. Position 129-130 (129-130 (RR)) interacts with dUMP. Cysteine 149 serves as the catalytic Nucleophile. DUMP-binding positions include 169–172 (RSAD), asparagine 180, and 210–212 (HIY). Aspartate 172 provides a ligand contact to (6R)-5,10-methylene-5,6,7,8-tetrahydrofolate. Position 265 (alanine 265) interacts with (6R)-5,10-methylene-5,6,7,8-tetrahydrofolate.

This sequence belongs to the thymidylate synthase family. Bacterial-type ThyA subfamily. Homodimer.

It localises to the cytoplasm. It carries out the reaction dUMP + (6R)-5,10-methylene-5,6,7,8-tetrahydrofolate = 7,8-dihydrofolate + dTMP. It functions in the pathway pyrimidine metabolism; dTTP biosynthesis. Its function is as follows. Catalyzes the reductive methylation of 2'-deoxyuridine-5'-monophosphate (dUMP) to 2'-deoxythymidine-5'-monophosphate (dTMP) while utilizing 5,10-methylenetetrahydrofolate (mTHF) as the methyl donor and reductant in the reaction, yielding dihydrofolate (DHF) as a by-product. This enzymatic reaction provides an intracellular de novo source of dTMP, an essential precursor for DNA biosynthesis. In Mycobacterium ulcerans (strain Agy99), this protein is Thymidylate synthase.